Here is a 439-residue protein sequence, read N- to C-terminus: Histidinol dehydrogenase (439 aa).

3 residues coordinate NAD(+): Tyr-125, Gln-187, and Asn-210. Substrate is bound by residues Thr-233, Gln-255, and His-258. Zn(2+) contacts are provided by Gln-255 and His-258. Active-site proton acceptor residues include Glu-323 and His-324. Residues His-324, Asp-357, Glu-411, and His-416 each coordinate substrate. Residue Asp-357 coordinates Zn(2+). His-416 serves as a coordination point for Zn(2+).

Belongs to the histidinol dehydrogenase family. Requires Zn(2+) as cofactor.

The catalysed reaction is L-histidinol + 2 NAD(+) + H2O = L-histidine + 2 NADH + 3 H(+). It participates in amino-acid biosynthesis; L-histidine biosynthesis; L-histidine from 5-phospho-alpha-D-ribose 1-diphosphate: step 9/9. In terms of biological role, catalyzes the sequential NAD-dependent oxidations of L-histidinol to L-histidinaldehyde and then to L-histidine. In Symbiobacterium thermophilum (strain DSM 24528 / JCM 14929 / IAM 14863 / T), this protein is Histidinol dehydrogenase.